The chain runs to 1331 residues: Xanthine dehydrogenase/oxidase (1331 aa).

A 2Fe-2S ferredoxin-type domain is found at 4-91 (DELVFFVNGK…HVAVTTVEGI (88 aa)). 8 residues coordinate [2Fe-2S] cluster: C43, C48, C51, C73, C113, C116, C148, and C150. Residues 229–412 (FEGERVTWIQ…LSIEIPYSRE (184 aa)) form the FAD-binding PCMH-type domain. Residues 257 to 264 (LVVGNTEI), F335, 345 to 349 (SIGGN), D358, L402, and K420 contribute to the FAD site. A disulfide bond links C534 and C991. Residues Q766 and F797 each contribute to the Mo-molybdopterin site. 2 residues coordinate substrate: E801 and R879. R911 provides a ligand contact to Mo-molybdopterin. Substrate is bound by residues F913 and T1009. A1078 serves as a coordination point for Mo-molybdopterin. The Proton acceptor role is filled by E1260.

The protein belongs to the xanthine dehydrogenase family. In terms of assembly, homodimer. Interacts with BTN1A1. Requires FAD as cofactor. It depends on Mo-molybdopterin as a cofactor. [2Fe-2S] cluster is required as a cofactor. Subject to partial proteolysis; this alters the enzyme from the dehydrogenase form (D) to the oxidase form (O). Post-translationally, contains sulfhydryl groups that are easily oxidized (in vitro); this alters the enzyme from the dehydrogenase form (D) to the oxidase form (O).

It is found in the cytoplasm. It localises to the peroxisome. Its subcellular location is the secreted. The enzyme catalyses xanthine + NAD(+) + H2O = urate + NADH + H(+). It carries out the reaction hypoxanthine + NAD(+) + H2O = xanthine + NADH + H(+). The catalysed reaction is xanthine + O2 + H2O = urate + H2O2. With respect to regulation, can be converted from the dehydrogenase form (D) to the oxidase form (O) irreversibly by proteolysis or reversibly through the oxidation of sulfhydryl groups. Functionally, key enzyme in purine degradation. Catalyzes the oxidation of hypoxanthine to xanthine. Catalyzes the oxidation of xanthine to uric acid. Contributes to the generation of reactive oxygen species. In Felis catus (Cat), this protein is Xanthine dehydrogenase/oxidase (XDH).